A 451-amino-acid chain; its full sequence is MEMILEEKDASDWIYRGEGGANLVLAYAGSSPLFVGKVIRIQKARRNDKAIKNANGVVSVLTSDEQHLWRENNELISSPNKEVLEQRYVKNVIIPLLGPKHVDAGVRVSVSKEFLECVDKKVTKQRPLWRVNAANVDTSHDSALILNDHSLFSQGISSGGDCISVEIKPKCGFLPTSRFIGKENMLKTSVSRFKMHQLLKLEYNEISEESEYDPLDLFSGSKESVLEAIKALYSTPQNNFRVFLNGSLILGGSGESTGRTSPEIGYAFEDALKGFIQSEDGHRTECFLQLVSDAVYGSGVLDRLLEIQKLDKLDIEGAIHSYYDLINQPCPICKEGKPLEAELSLHALPLDESLKIVKEYLIAATAKDCSIMISFQSRNAWDSEPSGDYVSLKPTNQTFDYKVHFIDLSLKPLKRMESYYKLDKKIISFYNRKQKAENTAEQIGNSKPSHS.

At methionine 1 the chain carries N-acetylmethionine. Residues 19-22 (GGAN) and arginine 40 contribute to the ATP site. Substrate-binding residues include arginine 45 and arginine 130. ATP-binding positions include 147–149 (NDH) and 166–168 (EIK). Positions 166–170 (EIKPK) match the EXKPK motif motif. Substrate contacts are provided by lysine 170, lysine 200, and asparagine 238. An ATP-binding site is contributed by arginine 241. Zn(2+) is bound by residues histidine 320, cysteine 330, cysteine 333, and histidine 346. Aspartate 368 is a binding site for substrate. An ATP-binding site is contributed by aspartate 407. Lysine 411, arginine 415, and tyrosine 419 together coordinate substrate.

It belongs to the IPK1 type 2 family. Zn(2+) serves as cofactor. Strongly expressed in leaves and cauline leaves. Weakly expressed in siliques and flowers. In flower, it is expressed in the major organs of developing flower buds. Strongly expressed in sepals, petals, in the male and female organs of immature and mature flower buds. Strongly expressed in the gynoecium and carpels which are fused to form the gynoecium. Also expressed in the transmitting tissue and ovules.

It carries out the reaction 1D-myo-inositol 1,3,4,5,6-pentakisphosphate + ATP = 1D-myo-inositol hexakisphosphate + ADP + H(+). Its function is as follows. Phosphorylates Ins(1,3,4,5,6)P5 at position 2 to form Ins(1,2,3,4,5,6)P6 (InsP6 or phytate). Phytate is a regulator of intracellular signaling, a highly abundant animal antinutrient, and a phosphate store in plant seeds. Also phosphorylates Ins(1,3,4,6)P4 and Ins(1,4,5,6)P4 to produce Ins(1,2,3,4,6)P5 and Ins(1,2,4,5,6)P5. The sequence is that of Inositol-pentakisphosphate 2-kinase (IPK1) from Arabidopsis thaliana (Mouse-ear cress).